The following is a 157-amino-acid chain: Small ribosomal subunit protein uS7 (157 aa).

This sequence belongs to the universal ribosomal protein uS7 family. As to quaternary structure, part of the 30S ribosomal subunit. Contacts proteins S9 and S11.

One of the primary rRNA binding proteins, it binds directly to 16S rRNA where it nucleates assembly of the head domain of the 30S subunit. Is located at the subunit interface close to the decoding center, probably blocks exit of the E-site tRNA. This Hydrogenovibrio crunogenus (strain DSM 25203 / XCL-2) (Thiomicrospira crunogena) protein is Small ribosomal subunit protein uS7.